Reading from the N-terminus, the 82-residue chain is MVTIRLARGGAKKRPFYQVVVTDSRNARDGRFIERVGFFNPIASGQAEALRLDLDRINHWVELGATVSDRVSALIKEAKKAA.

The protein belongs to the bacterial ribosomal protein bS16 family.

In Yersinia enterocolitica serotype O:8 / biotype 1B (strain NCTC 13174 / 8081), this protein is Small ribosomal subunit protein bS16.